A 443-amino-acid polypeptide reads, in one-letter code: ATP-dependent protease ATPase subunit HslU (443 aa).

ATP-binding positions include Ile18, 60–65 (GVGKTE), Asp256, Glu321, and Arg393.

It belongs to the ClpX chaperone family. HslU subfamily. A double ring-shaped homohexamer of HslV is capped on each side by a ring-shaped HslU homohexamer. The assembly of the HslU/HslV complex is dependent on binding of ATP.

It is found in the cytoplasm. In terms of biological role, ATPase subunit of a proteasome-like degradation complex; this subunit has chaperone activity. The binding of ATP and its subsequent hydrolysis by HslU are essential for unfolding of protein substrates subsequently hydrolyzed by HslV. HslU recognizes the N-terminal part of its protein substrates and unfolds these before they are guided to HslV for hydrolysis. The polypeptide is ATP-dependent protease ATPase subunit HslU (Escherichia fergusonii (strain ATCC 35469 / DSM 13698 / CCUG 18766 / IAM 14443 / JCM 21226 / LMG 7866 / NBRC 102419 / NCTC 12128 / CDC 0568-73)).